The primary structure comprises 108 residues: DNA-binding protein HBbu (108 aa).

It belongs to the bacterial histone-like protein family.

Functionally, histone-like DNA-binding protein which is capable of wrapping DNA to stabilize it, and thus to prevent its denaturation under extreme environmental conditions. This is DNA-binding protein HBbu (hbb) from Borreliella afzelii (Borrelia afzelii).